A 610-amino-acid chain; its full sequence is Elongation factor 4 (610 aa).

Residues 11–193 form the tr-type G domain; that stretch reads EKIRNFSIIA…QIVEKVPAPT (183 aa). Residues 23-28 and 140-143 each bind GTP; these read DHGKST and NKID.

The protein belongs to the TRAFAC class translation factor GTPase superfamily. Classic translation factor GTPase family. LepA subfamily.

Its subcellular location is the cell membrane. The catalysed reaction is GTP + H2O = GDP + phosphate + H(+). Its function is as follows. Required for accurate and efficient protein synthesis under certain stress conditions. May act as a fidelity factor of the translation reaction, by catalyzing a one-codon backward translocation of tRNAs on improperly translocated ribosomes. Back-translocation proceeds from a post-translocation (POST) complex to a pre-translocation (PRE) complex, thus giving elongation factor G a second chance to translocate the tRNAs correctly. Binds to ribosomes in a GTP-dependent manner. This Streptococcus suis (strain 98HAH33) protein is Elongation factor 4.